We begin with the raw amino-acid sequence, 995 residues long: Protein translocase subunit SecA (995 aa).

Residues glutamine 86, 104-108 (GEGKT), and aspartate 535 contribute to the ATP site. Residues 883-911 (AQTVSSDGNGEVVRKPQRRSTPQIGRNEL) form a disordered region. 4 residues coordinate Zn(2+): cysteine 912, cysteine 914, cysteine 923, and histidine 924. The interval 939–995 (PSAPPASKALKSTPATQTAVAEEAAKIQAAINSGKLPPTQTTPRGRQAPSVPRGKKR) is disordered. Residues 957 to 969 (AVAEEAAKIQAAI) are compositionally biased toward low complexity.

This sequence belongs to the SecA family. Monomer and homodimer. Part of the essential Sec protein translocation apparatus which comprises SecA, SecYEG and auxiliary proteins SecDF. Other proteins may also be involved. Zn(2+) serves as cofactor.

Its subcellular location is the cell membrane. The protein resides in the cytoplasm. It catalyses the reaction ATP + H2O + cellular proteinSide 1 = ADP + phosphate + cellular proteinSide 2.. Functionally, part of the Sec protein translocase complex. Interacts with the SecYEG preprotein conducting channel. Has a central role in coupling the hydrolysis of ATP to the transfer of proteins into and across the cell membrane, serving as an ATP-driven molecular motor driving the stepwise translocation of polypeptide chains across the membrane. The sequence is that of Protein translocase subunit SecA from Chloroflexus aurantiacus (strain ATCC 29366 / DSM 635 / J-10-fl).